Reading from the N-terminus, the 456-residue chain is Histidine--tRNA ligase (456 aa).

This sequence belongs to the class-II aminoacyl-tRNA synthetase family. Homodimer.

The protein localises to the cytoplasm. It catalyses the reaction tRNA(His) + L-histidine + ATP = L-histidyl-tRNA(His) + AMP + diphosphate + H(+). The polypeptide is Histidine--tRNA ligase (Cupriavidus taiwanensis (strain DSM 17343 / BCRC 17206 / CCUG 44338 / CIP 107171 / LMG 19424 / R1) (Ralstonia taiwanensis (strain LMG 19424))).